We begin with the raw amino-acid sequence, 893 residues long: DNA mismatch repair protein MutS (893 aa).

Over residues 1–17 (MESTMSSASTNASPPSA) the composition is skewed to low complexity. Residues 1-22 (MESTMSSASTNASPPSASEKHT) form a disordered region. Residue 641 to 648 (GPNMGGKS) participates in ATP binding.

Belongs to the DNA mismatch repair MutS family.

This protein is involved in the repair of mismatches in DNA. It is possible that it carries out the mismatch recognition step. This protein has a weak ATPase activity. This is DNA mismatch repair protein MutS from Herminiimonas arsenicoxydans.